Here is a 1438-residue protein sequence, read N- to C-terminus: Pyochelin synthetase PchE (1438 aa).

The Carrier 1 domain occupies 6–85 (DSRTALRDWL…AWLDLLACAD (80 aa)). The residue at position 46 (Ser-46) is an O-(pantetheine 4'-phosphoryl)serine. Residues 136-442 (RTRDVDPQRL…ARRQGQPRSA (307 aa)) form a condensation/cyclization region. The adenylation stretch occupies residues 563–950 (RAAEAPDADA…GRVDQQVKVR (388 aa)). One can recognise a Carrier 2 domain in the interval 1350-1425 (EPLEAHEQAL…GLARHLQVQT (76 aa)). Position 1385 is an O-(pantetheine 4'-phosphoryl)serine (Ser-1385).

The protein belongs to the NRP synthetase family. The cofactor is pantetheine 4'-phosphate.

The catalysed reaction is holo-[peptidyl-carrier protein] + L-cysteine + ATP = L-cysteinyl-[peptidyl-carrier protein] + AMP + diphosphate. Its pathway is siderophore biosynthesis. It functions in the pathway antifungal biosynthesis. Involved in the biosynthesis of the siderophore pyochelin. Accepts salicylate activated by PchD at the first peptidyl carrier domain (ArCP), and activates and fixes one molecule of cysteine at the second peptidyl carrier domain (PCP1) via a thioester linkage to the phosphopanthetheine moiety. Then catalyzes the condensation reaction between the salicylate bound to the first site and the cysteine bound to the second site, and the cyclization of the cysteine to form the salicyl-thiazolinyl-S-PCP1 intermediate at the second site. When this intermediate is released by the action of a thioesterase, it produces the antifungal antibiotic dihydroaeruginoic acid (Dha or hydroxyphenyl-thiazolinyl-carboxylate). This Pseudomonas aeruginosa (strain ATCC 15692 / DSM 22644 / CIP 104116 / JCM 14847 / LMG 12228 / 1C / PRS 101 / PAO1) protein is Pyochelin synthetase PchE.